Consider the following 654-residue polypeptide: Biotin-dependent 3-methylcrotonyl-coenzyme A carboxylase alpha1 subunit (654 aa).

A Biotin carboxylation domain is found at 1–448 (MFDTVLVANR…DTAVLDERSA (448 aa)). In terms of domain architecture, ATP-grasp spans 120-319 (KNAVAAFDVP…LVEWQLRVGA (200 aa)). 148–209 (AAEVGYPVLI…ERFVLRPRHI (62 aa)) serves as a coordination point for ATP. Positions 275, 290, and 292 each coordinate Mg(2+). Mn(2+)-binding residues include Glu-275, Glu-290, and Asn-292. Positions 578 to 653 (HRAVGARPAE…KVEQVLARIK (76 aa)) constitute a Biotinyl-binding domain. Lys-620 carries the N6-biotinyllysine modification.

As to quaternary structure, the biotin-dependent acyl-CoA carboxylase complex is composed of AccA1, which contains the biotin carboxylase (BC) and biotin carboxyl carrier protein (BCCP) domains, and AccD1, which contains the carboxyl transferase (CT) domain. The AccA1/AccD1 complex forms a dodecamer. The cofactor is Mg(2+). Mn(2+) serves as cofactor. Biotin is required as a cofactor.

The enzyme catalyses N(6)-biotinyl-L-lysyl-[protein] + hydrogencarbonate + ATP = N(6)-carboxybiotinyl-L-lysyl-[protein] + ADP + phosphate + H(+). It functions in the pathway amino-acid degradation; L-leucine degradation. Functionally, component of a biotin-dependent acyl-CoA carboxylase complex. This subunit catalyzes the ATP-dependent carboxylation of the biotin carried by the biotin carboxyl carrier (BCC) domain, resulting in the formation of carboxyl biotin. When associated with the beta1 subunit AccD1, is involved in branched amino-acid catabolism with methylcrotonyl coenzyme A as the substrate. The chain is Biotin-dependent 3-methylcrotonyl-coenzyme A carboxylase alpha1 subunit (accA1) from Mycobacterium bovis (strain ATCC BAA-935 / AF2122/97).